A 712-amino-acid polypeptide reads, in one-letter code: Secretin OutD (712 aa).

Positions 1 to 27 are cleaved as a signal peptide; that stretch reads MLGKGIKKSWGWLGLTVLLLGSPCGWA. Residues 28–124 are N0; that stretch reads AEFSASFKGT…LANNEQPGVG (97 aa). The tract at residues 126-190 is N1; the sequence is ELVTRVVPLN…DIVNTVDKTG (65 aa). Positions 191–264 are N2; it reads DREMITVSLN…MIRQLDRKQV (74 aa). The tract at residues 267–394 is N3; sequence GGTKVIYLKY…DLEQVINQLD (128 aa). The segment at 288-342 is disordered; the sequence is GNGTSGNRNSSSTNSSRPSSTRSSSTLNNSNSSSSGSSSGSGSSSSSSSSSMGFG. The segment at 399–651 is secretin; it reads QVLVEAIIAE…LFLRPTIIRD (253 aa). A s domain region spans residues 653-712; sequence QQYQQASISKYNSFNNEQQQQRGQGNSVLDNNTLRLSGGNTYTFRQVQSSISAFYQPEGR.

This sequence belongs to the bacterial secretin family. GSP D subfamily. Forms a cylindrical channel with 15 subunits.

It is found in the cell outer membrane. Functionally, involved in a type II secretion system (T2SS, formerly general secretion pathway, GSP) for the export of proteins. Required for the translocation of the multiple pectic enzymes. This subunit forms the outer membrane channel. In Dickeya chrysanthemi (Pectobacterium chrysanthemi), this protein is Secretin OutD (outD).